We begin with the raw amino-acid sequence, 509 residues long: UDP-N-acetylmuramoyl-L-alanyl-D-glutamate--2,6-diaminopimelate ligase (509 aa).

Ser32 contacts UDP-N-acetyl-alpha-D-muramoyl-L-alanyl-D-glutamate. 117–123 (GTNGKTT) is a binding site for ATP. Residues 159–160 (TT), Ser186, Gln192, and Arg194 contribute to the UDP-N-acetyl-alpha-D-muramoyl-L-alanyl-D-glutamate site. At Lys226 the chain carries N6-carboxylysine. Residues Arg401, 425-428 (DNPR), Gly476, and Glu480 contribute to the meso-2,6-diaminopimelate site. The Meso-diaminopimelate recognition motif signature appears at 425 to 428 (DNPR).

It belongs to the MurCDEF family. MurE subfamily. Requires Mg(2+) as cofactor. Post-translationally, carboxylation is probably crucial for Mg(2+) binding and, consequently, for the gamma-phosphate positioning of ATP.

Its subcellular location is the cytoplasm. It carries out the reaction UDP-N-acetyl-alpha-D-muramoyl-L-alanyl-D-glutamate + meso-2,6-diaminopimelate + ATP = UDP-N-acetyl-alpha-D-muramoyl-L-alanyl-gamma-D-glutamyl-meso-2,6-diaminopimelate + ADP + phosphate + H(+). It functions in the pathway cell wall biogenesis; peptidoglycan biosynthesis. In terms of biological role, catalyzes the addition of meso-diaminopimelic acid to the nucleotide precursor UDP-N-acetylmuramoyl-L-alanyl-D-glutamate (UMAG) in the biosynthesis of bacterial cell-wall peptidoglycan. The chain is UDP-N-acetylmuramoyl-L-alanyl-D-glutamate--2,6-diaminopimelate ligase from Prochlorococcus marinus (strain NATL2A).